Consider the following 228-residue polypeptide: Nucleolar protein 12 (228 aa).

The interval 1–22 (MGKSDRLQQGSKGKGGGKRKHG) is disordered. The stretch at 40–103 (FHKRKLERRR…AITATTECVQ (64 aa)) forms a coiled coil. Residues 126-145 (LLEPAQRDGGDGEERERTEA) show a composition bias toward basic and acidic residues. Positions 126-228 (LLEPAQRDGG…QTGRNERSQD (103 aa)) are disordered. The span at 158–170 (KIQSLTASLNSLV) shows a compositional bias: polar residues. Positions 171 to 180 (KQKKRRKQKR) are enriched in basic residues. Residues 181-195 (RQEAKQRSHQSDRKS) are compositionally biased toward basic and acidic residues. Residues 204-220 (NKQKQGKSTKRQRRRQT) are compositionally biased toward basic residues.

Belongs to the RRP17 family.

It is found in the nucleus. The protein resides in the nucleolus. In terms of biological role, may bind to rRNA. The sequence is that of Nucleolar protein 12 (nol12) from Danio rerio (Zebrafish).